The following is a 792-amino-acid chain: Xaa-Pro dipeptidyl-peptidase (792 aa).

Residues Ser-363, Asp-482, and His-513 each act as charge relay system in the active site.

It belongs to the peptidase S15 family. In terms of assembly, homodimer.

The protein resides in the cytoplasm. The catalysed reaction is Hydrolyzes Xaa-Pro-|- bonds to release unblocked, N-terminal dipeptides from substrates including Ala-Pro-|-p-nitroanilide and (sequentially) Tyr-Pro-|-Phe-Pro-|-Gly-Pro-|-Ile.. Removes N-terminal dipeptides sequentially from polypeptides having unsubstituted N-termini provided that the penultimate residue is proline. This chain is Xaa-Pro dipeptidyl-peptidase, found in Lactobacillus delbrueckii subsp. bulgaricus (strain ATCC 11842 / DSM 20081 / BCRC 10696 / JCM 1002 / NBRC 13953 / NCIMB 11778 / NCTC 12712 / WDCM 00102 / Lb 14).